The chain runs to 297 residues: PDZ domain-containing protein GIPC3 (297 aa).

In terms of domain architecture, PDZ spans 97–177 (EVEVTKTEDA…SQPFTLRLVQ (81 aa)).

It belongs to the GIPC family. Expressed in adult lung, brain and testis. In the inner ear, it is expressed in the inner and outer hair cells of the organ of Corti. Also expressed in cochlear spiral ganglion neurons.

Required for postnatal maturation of the hair bundle and long-term survival of hair cells and spiral ganglion. This is PDZ domain-containing protein GIPC3 (Gipc3) from Mus musculus (Mouse).